The sequence spans 375 residues: Methylthioribose-1-phosphate isomerase (375 aa).

The active-site Proton donor is the D259.

It belongs to the eIF-2B alpha/beta/delta subunits family. MtnA subfamily.

Its subcellular location is the cytoplasm. It localises to the nucleus. The enzyme catalyses 5-(methylsulfanyl)-alpha-D-ribose 1-phosphate = 5-(methylsulfanyl)-D-ribulose 1-phosphate. The protein operates within amino-acid biosynthesis; L-methionine biosynthesis via salvage pathway; L-methionine from S-methyl-5-thio-alpha-D-ribose 1-phosphate: step 1/6. In terms of biological role, catalyzes the interconversion of methylthioribose-1-phosphate (MTR-1-P) into methylthioribulose-1-phosphate (MTRu-1-P). The polypeptide is Methylthioribose-1-phosphate isomerase (Populus trichocarpa (Western balsam poplar)).